We begin with the raw amino-acid sequence, 381 residues long: Adenylate cyclase (381 aa).

A disordered region spans residues 1–30 (MTVDDTGSGADGDGRVDPEPAPDSADPGED). The region spanning 191 to 300 (AVGFADLVGF…TTVNLASRLT (110 aa)) is the Guanylate cyclase domain. Mg(2+) is bound by residues D196 and D240.

This sequence belongs to the adenylyl cyclase class-3 family. The cofactor is Mg(2+).

It carries out the reaction ATP = 3',5'-cyclic AMP + diphosphate. This chain is Adenylate cyclase (cya), found in Streptomyces coelicolor (strain ATCC BAA-471 / A3(2) / M145).